The sequence spans 341 residues: UDP-N-acetylenolpyruvoylglucosamine reductase (341 aa).

The 173-residue stretch at Phe-13–Ala-185 folds into the FAD-binding PCMH-type domain. Arg-161 is an active-site residue. The Proton donor role is filled by Ser-231. Glu-327 is a catalytic residue.

This sequence belongs to the MurB family. Requires FAD as cofactor.

It localises to the cytoplasm. The enzyme catalyses UDP-N-acetyl-alpha-D-muramate + NADP(+) = UDP-N-acetyl-3-O-(1-carboxyvinyl)-alpha-D-glucosamine + NADPH + H(+). Its pathway is cell wall biogenesis; peptidoglycan biosynthesis. In terms of biological role, cell wall formation. The protein is UDP-N-acetylenolpyruvoylglucosamine reductase of Shewanella sp. (strain MR-7).